The primary structure comprises 259 residues: 5'-nucleotidase SurE (259 aa).

4 residues coordinate a divalent metal cation: Asp8, Asp9, Ser39, and Asn98.

Belongs to the SurE nucleotidase family. It depends on a divalent metal cation as a cofactor.

Its subcellular location is the cytoplasm. It carries out the reaction a ribonucleoside 5'-phosphate + H2O = a ribonucleoside + phosphate. Its function is as follows. Nucleotidase that shows phosphatase activity on nucleoside 5'-monophosphates. The sequence is that of 5'-nucleotidase SurE from Fervidobacterium nodosum (strain ATCC 35602 / DSM 5306 / Rt17-B1).